A 1382-amino-acid polypeptide reads, in one-letter code: ABC-type transporter atr1 (1382 aa).

Basic and acidic residues predominate over residues Met-1–Gln-12. The disordered stretch occupies residues Met-1 to Pro-56. Residue Asn-62 is glycosylated (N-linked (GlcNAc...) asparagine). 6 helical membrane-spanning segments follow: residues Leu-101–Ile-121, Leu-159–Phe-179, Leu-233–Phe-253, Leu-259–Thr-279, Gly-339–Tyr-359, and Ile-374–Met-394. Residues Leu-101–Met-400 enclose the ABC transmembrane type-1 1 domain. A glycan (N-linked (GlcNAc...) asparagine) is linked at Asn-397. In terms of domain architecture, ABC transporter 1 spans Leu-445 to Arg-688. Gly-480–Ser-487 is an ATP binding site. Asn-680 is a glycosylation site (N-linked (GlcNAc...) asparagine). The interval Ser-738–Pro-768 is disordered. In terms of domain architecture, ABC transmembrane type-1 2 spans Leu-797–Ser-1094. Residues Leu-800–Ile-820 traverse the membrane as a helical segment. Asn-827 carries an N-linked (GlcNAc...) asparagine glycan. Residues Ile-848–Val-868 traverse the membrane as a helical segment. Asn-903 carries an N-linked (GlcNAc...) asparagine glycan. The next 2 helical transmembrane spans lie at Ser-911–Val-931 and Leu-951–Leu-973. The N-linked (GlcNAc...) asparagine glycan is linked to Asn-1020. 2 consecutive transmembrane segments (helical) span residues Val-1034 to Gly-1054 and Gly-1067 to Asn-1087. One can recognise an ABC transporter 2 domain in the interval Ile-1136–Leu-1377. Gly-1171–Ser-1178 contacts ATP. A glycan (N-linked (GlcNAc...) asparagine) is linked at Asn-1324.

Belongs to the ABC transporter superfamily. ABCB family. Multidrug resistance exporter (TC 3.A.1.201) subfamily.

The protein localises to the cell membrane. In terms of biological role, ABC-type transporter; part of the gene cluster that mediates the biosynthesis of the glycolipid biosurfactant ustilagic acid (UA). UA is a secreted cellobiose glycolipid that is toxic for many microorganisms and confers biocontrol activity to U.maydis. Export of UA is presumably catalyzed by the ABC transporter atr1. Atr1 appears to be quite unspecific, as many of the UA derivatives produced by cluster mutant strains are readily exported. This chain is ABC-type transporter atr1, found in Mycosarcoma maydis (Corn smut fungus).